A 1240-amino-acid polypeptide reads, in one-letter code: Cohesin subunit SA-3 (1240 aa).

Over residues Met-1 to Lys-25 the composition is skewed to low complexity. Positions Met-1 to Ser-108 are disordered. A compositionally biased stretch (polar residues) spans Arg-97–Ser-108. Positions Phe-324–Met-409 constitute an SCD domain. 2 disordered regions span residues Ala-1077–Ile-1154 and Asp-1213–Phe-1240. Polar residues predominate over residues Gly-1115 to Ala-1125. Over residues Val-1126 to Gly-1141 the composition is skewed to basic residues. Ser-1218 bears the Phosphoserine mark.

Belongs to the SCC3 family. In terms of assembly, component of the meiosis-specific cohesin complex, which also contains the SMC1 (SMC1A or SMC1B) and SMC3 heterodimer. Such complex likely contains RAD21, or the meiosis-specific related protein REC8. Interacts with CCDC79/TERB1; recruiting cohesin to telomeres to develop structural rigidity. Post-translationally, phosphorylated. In terms of tissue distribution, testis specific.

The protein localises to the nucleus. The protein resides in the chromosome. Its subcellular location is the centromere. Its function is as follows. Meiosis specific component of cohesin complex. The cohesin complex is required for the cohesion of sister chromatids after DNA replication. The cohesin complex apparently forms a large proteinaceous ring within which sister chromatids can be trapped. At anaphase, the complex is cleaved and dissociates from chromatin, allowing sister chromatids to segregate. The meiosis-specific cohesin complex probably replaces mitosis specific cohesin complex when it dissociates from chromatin during prophase I. The chain is Cohesin subunit SA-3 (Stag3) from Mus musculus (Mouse).